A 799-amino-acid chain; its full sequence is ATP-dependent RNA helicase DBP7 (799 aa).

Disordered stretches follow at residues 34-177 and 201-229; these read KALR…RRIR and DRIA…NAAL. 5 stretches are compositionally biased toward basic and acidic residues: residues 35–49, 56–66, 73–100, 114–132, and 139–172; these read ALRE…KKEQ, IEDRMKRREQD, KPYD…KSYD, EKYQ…ERWV, and NRRD…DGSL. Over residues 208–220 the composition is skewed to acidic residues; it reads VQMEDEEEEEAEN. A Q motif motif is present at residues 233-261; it reads TTFSGLGCSQRLVDALVGMQLAKPTKIQR. Residues 265-465 form the Helicase ATP-binding domain; sequence PRLIQRERDL…KSTLKDADWV (201 aa). Residues 278 to 285 and 306 to 313 contribute to the ATP site; these read AQTGSGKT and TGLFAVIL. The DEAD box motif lies at 391-394; it reads DEGD. Residues 511–679 form the Helicase C-terminal domain; that stretch reads DILQSSEKTN…NILAAGFGGK (169 aa). The segment at 750–799 is disordered; sequence KLGKKKDPEKIKVNKDGSLDETQARKKMLDRSRKHVYNSGESAMGGYVLE. Residues 754–780 are compositionally biased toward basic and acidic residues; sequence KKDPEKIKVNKDGSLDETQARKKMLDR.

Belongs to the DEAD box helicase family. DDX31/DBP7 subfamily.

Its subcellular location is the nucleus. The protein resides in the nucleolus. The enzyme catalyses ATP + H2O = ADP + phosphate + H(+). In terms of biological role, ATP-binding RNA helicase involved in the biogenesis of 60S ribosomal subunits and is required for the normal formation of 25S and 5.8S rRNAs. The sequence is that of ATP-dependent RNA helicase DBP7 (DBP7) from Yarrowia lipolytica (strain CLIB 122 / E 150) (Yeast).